A 123-amino-acid chain; its full sequence is Large ribosomal subunit protein bL19 (123 aa).

Belongs to the bacterial ribosomal protein bL19 family.

Its function is as follows. This protein is located at the 30S-50S ribosomal subunit interface and may play a role in the structure and function of the aminoacyl-tRNA binding site. This is Large ribosomal subunit protein bL19 from Ureaplasma parvum serovar 3 (strain ATCC 27815 / 27 / NCTC 11736).